The chain runs to 139 residues: Holo-[acyl-carrier-protein] synthase (139 aa).

Mg(2+) contacts are provided by Asp-8 and Glu-57.

Belongs to the P-Pant transferase superfamily. AcpS family. Mg(2+) is required as a cofactor.

It localises to the cytoplasm. The catalysed reaction is apo-[ACP] + CoA = holo-[ACP] + adenosine 3',5'-bisphosphate + H(+). In terms of biological role, transfers the 4'-phosphopantetheine moiety from coenzyme A to a Ser of acyl-carrier-protein. The protein is Holo-[acyl-carrier-protein] synthase of Sinorhizobium medicae (strain WSM419) (Ensifer medicae).